The sequence spans 84 residues: MAHKKGGGSSKNGRDSNSQRLGVKRFGGESVLAGNILVRQRGTKFRPGNNVGLGKDHTLFALVTGKVKFEMVTKLKMQVSVYPE.

Residues 1 to 24 (MAHKKGGGSSKNGRDSNSQRLGVK) are disordered.

Belongs to the bacterial ribosomal protein bL27 family.

In Leptospira borgpetersenii serovar Hardjo-bovis (strain JB197), this protein is Large ribosomal subunit protein bL27.